We begin with the raw amino-acid sequence, 1481 residues long: Cystic fibrosis transmembrane conductance regulator (1481 aa).

The Cytoplasmic segment spans residues methionine 1 to phenylalanine 77. Residues phenylalanine 78–glutamine 98 form a helical membrane-spanning segment. The ABC transmembrane type-1 1 domain occupies phenylalanine 81–leucine 365. Over proline 99–tyrosine 122 the chain is Extracellular. The chain crosses the membrane as a helical span at residues leucine 123–histidine 146. Residues histidine 147 to leucine 195 lie on the Cytoplasmic side of the membrane. A helical transmembrane segment spans residues alanine 196–tryptophan 216. Residues glutamate 217 to serine 222 are Extracellular-facing. A helical transmembrane segment spans residues alanine 223–methionine 243. Residues methionine 244–lysine 298 are Cytoplasmic-facing. The chain crosses the membrane as a helical span at residues alanine 299–phenylalanine 319. At leucine 320–threonine 339 the chain is on the extracellular side. Residues isoleucine 340 to valine 358 form a helical membrane-spanning segment. Residues glutamine 359 to serine 858 are Cytoplasmic-facing. ATP is bound by residues tryptophan 401, serine 434, glycine 458–threonine 465, and glutamine 493. The 224-residue stretch at asparagine 423 to glycine 646 folds into the ABC transporter 1 domain. Cysteine 524 carries the S-palmitoyl cysteine lipid modification. Residues serine 549 and serine 660 each carry the phosphoserine modification. Residues serine 654–glutamate 831 are disordered R region. Serine 670 carries the post-translational modification Phosphoserine; by PKA. Residue serine 686 is modified to Phosphoserine. Residue lysine 688 forms a Glycyl lysine isopeptide (Lys-Gly) (interchain with G-Cter in ubiquitin) linkage. 2 positions are modified to phosphoserine: serine 700 and serine 712. At threonine 717 the chain carries Phosphothreonine. Phosphoserine is present on residues serine 737, serine 753, serine 768, serine 790, serine 795, and serine 813. A helical transmembrane segment spans residues leucine 859–valine 879. In terms of domain architecture, ABC transmembrane type-1 2 spans leucine 859 to serine 1155. Residues valine 880–isoleucine 918 lie on the Extracellular side of the membrane. N-linked (GlcNAc...) asparagine glycans are attached at residues asparagine 894 and asparagine 900. A discontinuously helical transmembrane segment spans residues tyrosine 919–histidine 939. Residues threonine 940–threonine 990 are Cytoplasmic-facing. The helical transmembrane segment at isoleucine 991–leucine 1011 threads the bilayer. Residues glutamine 1012–proline 1013 lie on the Extracellular side of the membrane. The chain crosses the membrane as a helical span at residues tyrosine 1014 to leucine 1034. At glutamine 1035–threonine 1095 the chain is on the cytoplasmic side. Residues leucine 1096–phenylalanine 1116 form a helical membrane-spanning segment. The Extracellular portion of the chain corresponds to isoleucine 1117–glycine 1130. The helical transmembrane segment at isoleucine 1131–isoleucine 1151 threads the bilayer. Over aspartate 1152–leucine 1481 the chain is Cytoplasmic. The ABC transporter 2 domain occupies methionine 1211–proline 1444. Residues tyrosine 1220 and glycine 1245–serine 1252 contribute to the ATP site. The tract at residues arginine 1387–leucine 1481 is interaction with GORASP2. Residue cysteine 1396 is the site of S-palmitoyl cysteine attachment. A phosphoserine mark is found at serine 1445 and serine 1457. The PDZ-binding signature appears at threonine 1479 to leucine 1481.

It belongs to the ABC transporter superfamily. ABCC family. CFTR transporter (TC 3.A.1.202) subfamily. As to quaternary structure, monomer; does not require oligomerization for channel activity. May form oligomers in the membrane. Interacts with SLC26A3, SLC26A6 and NHERF1. Interacts with SHANK2. Interacts with MYO6. Interacts (via C-terminus) with GOPC (via PDZ domain); this promotes CFTR internalization and thereby decreases channel activity. Interacts with SLC4A7 through NHERF1. Found in a complex with MYO5B and RAB11A. Interacts with ANO1. Interacts with SLC26A8. Interacts with AHCYL1; the interaction increases CFTR activity. Interacts with CSE1L. The core-glycosylated form interacts with GORASP2 (via PDZ GRASP-type 1 domain) in respone to ER stress. Interacts with MARCHF2; the interaction leads to CFTR ubiqtuitination and degradation. Interacts with ADGRG2. N-glycosylated. In terms of processing, phosphorylated; cAMP treatment promotes phosphorylation and activates the channel. Dephosphorylation decreases the ATPase activity (in vitro). Phosphorylation at PKA sites activates the channel. Phosphorylation at PKC sites enhances the response to phosphorylation by PKA. Phosphorylated by AMPK; this inhibits channel activity. Post-translationally, ubiquitinated, leading to its degradation in the lysosome. Deubiquitination by USP10 in early endosomes enhances its endocytic recycling to the cell membrane. Ubiquitinated by RNF185 during ER stress. Ubiquitinated by MARCHF2.

The protein localises to the apical cell membrane. It is found in the early endosome membrane. The protein resides in the cell membrane. It localises to the recycling endosome membrane. Its subcellular location is the endoplasmic reticulum membrane. The protein localises to the nucleus. The catalysed reaction is ATP + H2O + closed Cl(-) channel = ADP + phosphate + open Cl(-) channel.. It catalyses the reaction chloride(in) = chloride(out). It carries out the reaction hydrogencarbonate(in) = hydrogencarbonate(out). The enzyme catalyses ATP + H2O = ADP + phosphate + H(+). Epithelial ion channel that plays an important role in the regulation of epithelial ion and water transport and fluid homeostasis. Mediates the transport of chloride ions across the cell membrane. Possesses an intrinsic ATPase activity and utilizes ATP to gate its channel; the passive flow of anions through the channel is gated by cycles of ATP binding and hydrolysis by the ATP-binding domains. The ion channel is also permeable to HCO(3)(-); selectivity depends on the extracellular chloride concentration. Exerts its function also by modulating the activity of other ion channels and transporters. Contributes to the regulation of the pH and the ion content of the epithelial fluid layer. Modulates the activity of the epithelial sodium channel (ENaC) complex, in part by regulating the cell surface expression of the ENaC complex. May regulate bicarbonate secretion and salvage in epithelial cells by regulating the transporter SLC4A7. Can inhibit the chloride channel activity of ANO1. Plays a role in the chloride and bicarbonate homeostasis during sperm epididymal maturation and capacitation. This Macaca nemestrina (Pig-tailed macaque) protein is Cystic fibrosis transmembrane conductance regulator.